Here is a 145-residue protein sequence, read N- to C-terminus: Meiotically up-regulated gene 124 protein (145 aa).

The next 2 helical transmembrane spans lie at 18 to 38 (IILTIINSLVYLVNFISCPSI) and 95 to 115 (FAWSCALPCFVDSFFPSNFFL).

The protein localises to the membrane. Functionally, has a role in meiosis. The chain is Meiotically up-regulated gene 124 protein (mug124) from Schizosaccharomyces pombe (strain 972 / ATCC 24843) (Fission yeast).